The following is a 111-amino-acid chain: uncharacterized protein (111 aa).

3 consecutive transmembrane segments (helical) span residues A22 to T42, L48 to L68, and V75 to L95.

Its subcellular location is the membrane. This is an uncharacterized protein from Saccharomyces cerevisiae (strain ATCC 204508 / S288c) (Baker's yeast).